Reading from the N-terminus, the 394-residue chain is Candidapepsin (394 aa).

The first 23 residues, 1 to 23, serve as a signal peptide directing secretion; it reads MATIFLFTKNVFIALAFALFAQG. The propeptide at 24 to 60 is activation peptide; sequence LTIPDGIEKRTDKVVSLDFTVIRKPFNATAHRLIQKR. A glycan (N-linked (GlcNAc...) asparagine) is linked at Asn50. Residues 74–381 form the Peptidase A1 domain; it reads YAADIVVGSN…DLDDKTISLA (308 aa). Residue Asp92 is part of the active site. A disulfide bridge connects residues Cys107 and Cys119. Asp278 is a catalytic residue. Cys314 and Cys347 are joined by a disulfide.

Belongs to the peptidase A1 family. In terms of processing, O-glycosylated.

It localises to the secreted. It carries out the reaction Preferential cleavage at the carboxyl of hydrophobic amino acids, but fails to cleave 15-Leu-|-Tyr-16, 16-Tyr-|-Leu-17 and 24-Phe-|-Phe-25 of insulin B chain. Activates trypsinogen, and degrades keratin.. This Candida tropicalis (Yeast) protein is Candidapepsin (SAPT1).